The primary structure comprises 609 residues: DNA-directed RNA polymerase subunit beta' (609 aa).

Cysteine 67, cysteine 69, cysteine 82, and cysteine 85 together coordinate Zn(2+). Mg(2+) is bound by residues aspartate 460, aspartate 462, and aspartate 464.

It belongs to the RNA polymerase beta' chain family. RpoC1 subfamily. In plastids the minimal PEP RNA polymerase catalytic core is composed of four subunits: alpha, beta, beta', and beta''. When a (nuclear-encoded) sigma factor is associated with the core the holoenzyme is formed, which can initiate transcription. The cofactor is Mg(2+). Zn(2+) is required as a cofactor.

The protein localises to the plastid. It localises to the chloroplast. It carries out the reaction RNA(n) + a ribonucleoside 5'-triphosphate = RNA(n+1) + diphosphate. In terms of biological role, DNA-dependent RNA polymerase catalyzes the transcription of DNA into RNA using the four ribonucleoside triphosphates as substrates. The sequence is that of DNA-directed RNA polymerase subunit beta' from Emiliania huxleyi (Coccolithophore).